The following is a 372-amino-acid chain: Glutamate 5-kinase (372 aa).

Residue K14 participates in ATP binding. Residues S54, D141, and N153 each coordinate substrate. An ATP-binding site is contributed by T173–D174. A PUA domain is found at R280–V358.

The protein belongs to the glutamate 5-kinase family.

Its subcellular location is the cytoplasm. The enzyme catalyses L-glutamate + ATP = L-glutamyl 5-phosphate + ADP. It functions in the pathway amino-acid biosynthesis; L-proline biosynthesis; L-glutamate 5-semialdehyde from L-glutamate: step 1/2. Functionally, catalyzes the transfer of a phosphate group to glutamate to form L-glutamate 5-phosphate. The polypeptide is Glutamate 5-kinase (Pseudomonas paraeruginosa (strain DSM 24068 / PA7) (Pseudomonas aeruginosa (strain PA7))).